We begin with the raw amino-acid sequence, 217 residues long: Small ribosomal subunit protein uS3 (217 aa).

The KH type-2 domain maps to Ile40 to Arg110.

It belongs to the universal ribosomal protein uS3 family. In terms of assembly, part of the 30S ribosomal subunit. Forms a tight complex with proteins S10 and S14.

Binds the lower part of the 30S subunit head. Binds mRNA in the 70S ribosome, positioning it for translation. The protein is Small ribosomal subunit protein uS3 of Rickettsia felis (strain ATCC VR-1525 / URRWXCal2) (Rickettsia azadi).